The primary structure comprises 729 residues: MDDSTQAAEAVITTPTGARTVRFETGRLARQAAGAVVAHLGDTMVLSATTVSRSPKEQLDFFPLTVDVEERMYAAGRIPGSFFRREGRPSEDAILTCRLIDRPLRPSFAKGLRNEIQVVATVLALDPDTLYDVVAINAASASTMLAGLPFSGPIGATRVGYVDGDWIAFPTHSELERATFDMVVAGRVLEDGSDVAIMMVEAEATPGTVALVAGGAPAPTEEVVAAGLEAAKPAIRELCRAQSELAAGAAKPQREFPLFIDYHDDVLETLTAAVGEELAAALRIAGKAERETELERVRALAVEKVSGQFEGRDKEISPAYRALTKKLVRSRIVTDGVRIDGRSTTEIRELSAEVDYIPRVHGSALFERGETQILGVTTLAMLRMEQTVDTLNPDRTKRYMHNYNFPPYSTGETGRVGSPKRREIGHGALAERALLPVLPSREEFPYAIRQVSEALSSNGSTSMGSVCASTLSLLNAGVPLKAPVAGIAMGLIREGDAFVTLTDILGAEDAYGDMDFKVAGTQEFVTALQLDTKLDGIPASVLAGALQQARAARLTILEVMAEAIGGPDEMSAHAPRVISVKIPVDKIGEVIGPKGKMINQIQADSGAEITVEDDGTIYIGAADGPAAETARSAINAIANPQMPEVGERYLGTIVKITNFGAFVSLTPGKDGLLHVSKLKQLAGGKRVEKVEDVLSVGQKLQVEITEIDARGKISLAPGAESIDTVSAGS.

Residues 399 to 419 (YMHNYNFPPYSTGETGRVGSP) are disordered. Residues aspartate 509 and aspartate 515 each contribute to the Mg(2+) site. Residues 575-634 (PRVISVKIPVDKIGEVIGPKGKMINQIQADSGAEITVEDDGTIYIGAADGPAAETARSAI) form the KH domain. Residues 646-718 (GERYLGTIVK…ARGKISLAPG (73 aa)) enclose the S1 motif domain.

This sequence belongs to the polyribonucleotide nucleotidyltransferase family. It depends on Mg(2+) as a cofactor.

The protein localises to the cytoplasm. It carries out the reaction RNA(n+1) + phosphate = RNA(n) + a ribonucleoside 5'-diphosphate. In terms of biological role, involved in mRNA degradation. Catalyzes the phosphorolysis of single-stranded polyribonucleotides processively in the 3'- to 5'-direction. The sequence is that of Polyribonucleotide nucleotidyltransferase from Parafrankia sp. (strain EAN1pec).